The chain runs to 524 residues: RNA-splicing ligase RtcB homolog 1 (524 aa).

Mn(2+) is bound by residues D141, C144, H249, H281, and H372. N248 to E252 serves as a coordination point for GMP. GMP contacts are provided by residues H372 to N373, G421 to M424, S428, H447 to G450, and K523. H447 serves as the catalytic GMP-histidine intermediate.

Belongs to the RtcB family. Catalytic component of the tRNA-splicing ligase complex. Mn(2+) is required as a cofactor.

The enzyme catalyses a 3'-end 3'-phospho-ribonucleotide-RNA + a 5'-end dephospho-ribonucleoside-RNA + GTP = a ribonucleotidyl-ribonucleotide-RNA + GMP + diphosphate. It catalyses the reaction a 3'-end 2',3'-cyclophospho-ribonucleotide-RNA + a 5'-end dephospho-ribonucleoside-RNA + GTP + H2O = a ribonucleotidyl-ribonucleotide-RNA + GMP + diphosphate + H(+). In terms of biological role, catalytic subunit of the tRNA-splicing ligase complex that acts by directly joining spliced tRNA halves to mature-sized tRNAs by incorporating the precursor-derived splice junction phosphate into the mature tRNA as a canonical 3',5'-phosphodiester. May act as an RNA ligase with broad substrate specificity, and may function toward other RNAs. In Entamoeba histolytica (strain ATCC 30459 / HM-1:IMSS / ABRM), this protein is RNA-splicing ligase RtcB homolog 1.